Consider the following 160-residue polypeptide: Large ribosomal subunit protein uL22c (160 aa).

It belongs to the universal ribosomal protein uL22 family. As to quaternary structure, part of the 50S ribosomal subunit.

The protein resides in the plastid. It is found in the chloroplast. Its function is as follows. This protein binds specifically to 23S rRNA. The globular domain of the protein is located near the polypeptide exit tunnel on the outside of the subunit, while an extended beta-hairpin is found that lines the wall of the exit tunnel in the center of the 70S ribosome. The protein is Large ribosomal subunit protein uL22c (rpl22) of Aethionema cordifolium (Lebanon stonecress).